The following is a 347-amino-acid chain: Nod factor export ATP-binding protein I (347 aa).

Basic and acidic residues predominate over residues methionine 1–arginine 11. The disordered stretch occupies residues methionine 1 to isoleucine 32. The segment covering methionine 17 to serine 26 has biased composition (polar residues). Positions isoleucine 49–tyrosine 279 constitute an ABC transporter domain. Glycine 81–serine 88 is an ATP binding site.

The protein belongs to the ABC transporter superfamily. Lipooligosaccharide exporter (TC 3.A.1.102) family. The complex is composed of two ATP-binding proteins (NodI) and two transmembrane proteins (NodJ).

It localises to the cell inner membrane. In terms of biological role, part of the ABC transporter complex NodIJ involved in the export of the nodulation factors (Nod factors), the bacterial signal molecules that induce symbiosis and subsequent nodulation induction. Nod factors are LCO (lipo-chitin oligosaccharide), a modified beta-1,4-linked N-acetylglucosamine oligosaccharide. This subunit is responsible for energy coupling to the transport system. This is Nod factor export ATP-binding protein I from Neorhizobium galegae (Rhizobium galegae).